Consider the following 1080-residue polypeptide: AP-4 complex subunit epsilon (1080 aa).

5 HEAT repeats span residues D161–D198, L201–T238, Q369–P405, K406–V443, and P445–P479. Disordered stretches follow at residues T711 to Q782, N801 to P920, F933 to N973, and T996 to L1027. Composition is skewed to low complexity over residues Q762–Q782, N801–Q847, N878–H911, N936–N952, and K962–N972.

The protein belongs to the adaptor complexes large subunit family. As to quaternary structure, may be part of the adaptor protein complex 4 (AP-4), a heterotetramer composed of two large adaptins (epsilon-type subunitand beta-type subunit), a medium adaptin (mu-type subunit) and a small adaptin (sigma-type).

The protein localises to the golgi apparatus. The protein resides in the trans-Golgi network membrane. Probable component of an adaptor protein complex. Adaptor protein complexes are vesicle coat components involved both in vesicle formation and cargo selection. They control the vesicular transport of proteins in different trafficking pathways. In Dictyostelium discoideum (Social amoeba), this protein is AP-4 complex subunit epsilon.